Here is a 241-residue protein sequence, read N- to C-terminus: 1-(5-phosphoribosyl)-5-[(5-phosphoribosylamino)methylideneamino] imidazole-4-carboxamide isomerase (241 aa).

The Proton acceptor role is filled by aspartate 8. Aspartate 130 acts as the Proton donor in catalysis.

This sequence belongs to the HisA/HisF family.

The protein localises to the cytoplasm. It carries out the reaction 1-(5-phospho-beta-D-ribosyl)-5-[(5-phospho-beta-D-ribosylamino)methylideneamino]imidazole-4-carboxamide = 5-[(5-phospho-1-deoxy-D-ribulos-1-ylimino)methylamino]-1-(5-phospho-beta-D-ribosyl)imidazole-4-carboxamide. The protein operates within amino-acid biosynthesis; L-histidine biosynthesis; L-histidine from 5-phospho-alpha-D-ribose 1-diphosphate: step 4/9. This Leptospira borgpetersenii serovar Hardjo-bovis (strain L550) protein is 1-(5-phosphoribosyl)-5-[(5-phosphoribosylamino)methylideneamino] imidazole-4-carboxamide isomerase.